The sequence spans 2512 residues: MEDVVIAGIAGKLPESENLQEFWENLLNGVDMVTEDDRRWKPGIYGLPKRNGKLKDIKKFDASFFGVHPKQAHTMDPQLRLLLEVSYEAILDGGINPTALRGTDTGVWVGASGSEALEALSQDPEELLGYSMTGCQRAMLANRISYFYDFTGPSLTIDTACSSSLMALENAYKAIRHGQCSAALVGGVNILLKPNTSVQFMKLGMLSPDGACKAFDVSGNGYCRSEAVVVVLLTKKSMAKRVYATIVNAGSNTDGFKEQGVTFPSGEMQQQLVGSLYRECGIKPGDVEYVEAHGTGTKVGDPQEVNGIVNVFCQCEREPLLIGSTKSNMGHPEPASGLAALAKVILSLEHGLWAPNLHFNDPNPDIPALHDGSLKVVCKPTPVKGGLVSINSFGFGGSNAHVILRPNEKKCQPQETCNLPRLVQVCGRTQEAVEILIEESRKHGGCSPFLSLLSDISAVPVSSMPYRGYTLVGTESDITEIQQVQASGRPLWYICSGMGTQWKGMGLSLMKLDLFRQSILRSDEALKSTGLKVSDLLLNADENTFDDTVHAFVGLAAIQIAQIDVLKAAGLQPDGILGHSVGELACGYADNSLSHEEAVLAAYWRGRCVKEAKLPPGGMAAVGLTWEECKQRCPPNVVPACHNSEDTVTVSGPLDSVSEFVTKLKKDGVFAKEVRRAGVAFHSYYMASIAPALLSALKKVIPHPKPRSARWISTSIPESQWQSDLARNSSAEYHVNNLVNPVLFHEGLKHIPENAVVVEIAPHALLQAILRRTLKPTCTILPLMKKDHKNNLEFFLTQTGKIHLTGINVLGNNLFPPVEYPVPVGTPLISPYIKWDHSQDWDVPKAEDFPSGSKGSASASVYNIDVSPDSPDHYLVGHCIDGRVLYPATGYLVLAWRTLARSLGMVMEQTAVMFEEVTIHQATILPKKGSTQLEVRIMPASHSFEVSGNGNLAVSGKISLLENDALKNFHNQLADFQSQANVTAKSGLLMEDVYQELHLRGYNYGPTFQGVLECNSEGSAGKILWNGNWVTFLDTLLHLIVLAETGRSLRLPTRIRSVYIDPVLHQEQVYQYQDNVEAFDVVVDRCLDSLKAGGVQINGLHASVAPRRQQERISPTLEKFSFVPYIESDCLSSSTQLHAYLEHCKGLIQKLQAKMALHGVKLVIHGLETKGAAAGSPPAQKGLQHILTEICRLELNGNPHSELEQIVTQEKMHLQDDPLLNGLLDSSELKTCLDVAKENTTSHRMKIVEALAGSGRLFSRVQSILNTQPLLQLDYIATDCTPETLSDNETELHDAGISFSQWDPSSLPSGNLTNADLAVCNCSTSVLGNTAEIISNLAAAVKEGGFVLLHTLLKEETLGEIVSFLTSPDLQQKHSFLSQAQWEELFSKASLNLVAMKRSFFGSVIFLCRRQSPAKAPILLPVDDTHYKWVDSLKEILADSSEQPLWLTATNCGNSGILGMVNCLRLEAEGHRIRCVFVSNLSPSSTVPATSLSSLEMQKIIERDLVMNVYRDGKWGSFRHLPLQQAQPQELTECAYVNVLTRGDLSSLRWIVSPLRHFQTTNPNVQLCKVYYASLNFWDIMLATGKLSPDAIPGNWTLQQCMLGMEFSGRDLAGRRVMGLLPAKGLATVVDCDKRFLWEVPENWTLEEAASVPVVYATAYYALVVRGGMKKGESVLIHSGSGGVGQAAIAIALSMGCRVFATVGSAEKREYLQARFPQLDANSFASSRNTTFQQHILRVTNGKGVSLVLNSLAEEKLQASLRCLAQHGRFLEIGKFDLSNNSQLGMALFLKNVAFHGILLDSIFEEGNQEWEVVSELLTKGIKDGVVKPLRTTVFGKEEVEAAFRFMAQGKHIGKVMIKIQEEEKQYPLRSEPVKLSAISRTSCPPTKSYIITGGLGGFGLELAQWLIERGAQKLVLTSRSGIRTGYQAKCVREWKALGIQVLVSTSDVGTLEGTQLLIEEALKLGPVGGIFNLAVVLKDAMIENQTPELFWEVNKPKYSGTLHLDWVTRKKCPDLDYFVVFSSVSCGRGNAGQSNYGFANSAMERICEQRHHDGLPGLAVQWGAIGDVGILKAMGNREVVIGGTVLQQISSCLEVLDMFLNQPHPVMSSFVLAEKVSVKSEGGSQRDLVEAVAHILGVRDVSSLNAESSLADLGLDSLMGVEVRQTLERDYDIVMTMREIRLLTINKLRELSSKTGTAEELKPSQVLKTGPGEPPKLDLNNLLVNPEGPTITRLNEVQSTERPLFLVHPIEGSIAVFYTLASKLHMPCYGLQCTKAAPLDSIQSLASYYIDCMKQIQPEGPYRIAGYSFGACVAFEMCSQLQAQQNASHALNSLFLFDGSHSFVAAYTQSYRAKLTQGNEAALETEALCAFVQQFTGIEYNKLLEILLPLEDLEARVNAAADLITQIHKNINREALSFAAASFYHKLKAADKYIPESKYHGNVTLMRAKTHNEYEEGLGGDYRLSEVCDGKVSVHIIEGDHRTLLEGDGVESIIGIIHGSLAEPRVSVREG.

E2 carries the N-acetylglutamate modification. In terms of domain architecture, Ketosynthase family 3 (KS3) spans 2–406 (EDVVIAGIAG…GSNAHVILRP (405 aa)). Catalysis depends on for beta-ketoacyl synthase activity residues C161, H293, and H331. Residues 427 to 815 (GRTQEAVEIL…GINVLGNNLF (389 aa)) form an acyl and malonyl transferases region. S580 functions as the For acyl/malonyl transferase activity in the catalytic mechanism. An acyl-CoA-binding positions include 646–647 (DT), F670, and R772. An N-terminal hotdog fold region spans residues 844-967 (PKAEDFPSGS…ISLLENDALK (124 aa)). The PKS/mFAS DH domain maps to 844–1111 (PKAEDFPSGS…ASVAPRRQQE (268 aa)). H878 (proton acceptor; for dehydratase activity) is an active-site residue. The segment at 984–1111 (AKSGLLMEDV…ASVAPRRQQE (128 aa)) is C-terminal hotdog fold. The Proton donor; for dehydratase activity role is filled by D1034. S-nitrosocysteine is present on C1475. Residues 1638-1866 (WEVPENWTLE…MIKIQEEEKQ (229 aa)) are enoyl reductase. 1675-1692 (VLIHSGSGGVGQAAIAIA) is a binding site for NADP(+). K1708 bears the N6-(pyridoxal phosphate)lysine mark. Residues 1867–2119 (YPLRSEPVKL…SFVLAEKVSV (253 aa)) are beta-ketoacyl reductase. NADP(+) is bound at residue 1889 to 1904 (SYIITGGLGGFGLELA). The residue at position 2093 (C2093) is an S-nitrosocysteine. Residues 2120–2200 (KSEGGSQRDL…ELSSKTGTAE (81 aa)) form the Carrier domain. S2158 is subject to O-(pantetheine 4'-phosphoryl)serine. A thioesterase region spans residues 2209-2511 (KTGPGEPPKL…LAEPRVSVRE (303 aa)). Catalysis depends on for thioesterase activity residues S2309 and H2482.

Homodimer which is arranged in a head to tail fashion. Post-translationally, S-nitrosylation of Fatty acid synthase at cysteine residues Cys-1475 or Cys-2093 is important for the enzyme dimerization. In adipocytes, S-nitrosylation of Fatty acid synthase occurs under physiological conditions and gradually increases during adipogenesis.

The enzyme catalyses acetyl-CoA + n malonyl-CoA + 2n NADPH + 2n H(+) = a long-chain fatty acid + (n+1) CoA + n CO2 + 2n NADP(+).. It catalyses the reaction holo-[ACP] + acetyl-CoA = acetyl-[ACP] + CoA. The catalysed reaction is holo-[ACP] + malonyl-CoA = malonyl-[ACP] + CoA. It carries out the reaction a fatty acyl-[ACP] + malonyl-[ACP] + H(+) = a 3-oxoacyl-[ACP] + holo-[ACP] + CO2. The enzyme catalyses a (3R)-hydroxyacyl-[ACP] + NADP(+) = a 3-oxoacyl-[ACP] + NADPH + H(+). It catalyses the reaction a (3R)-hydroxyacyl-[ACP] = a (2E)-enoyl-[ACP] + H2O. The catalysed reaction is a 2,3-saturated acyl-[ACP] + NADP(+) = a (2E)-enoyl-[ACP] + NADPH + H(+). It carries out the reaction hexadecanoyl-[ACP] + H2O = hexadecanoate + holo-[ACP] + H(+). The enzyme catalyses acetyl-[ACP] + malonyl-[ACP] + H(+) = 3-oxobutanoyl-[ACP] + holo-[ACP] + CO2. It catalyses the reaction 3-oxobutanoyl-[ACP] + NADPH + H(+) = (3R)-hydroxybutanoyl-[ACP] + NADP(+). The catalysed reaction is (3R)-hydroxybutanoyl-[ACP] = (2E)-butenoyl-[ACP] + H2O. It carries out the reaction (2E)-butenoyl-[ACP] + NADPH + H(+) = butanoyl-[ACP] + NADP(+). The enzyme catalyses butanoyl-[ACP] + malonyl-[ACP] + H(+) = 3-oxohexanoyl-[ACP] + holo-[ACP] + CO2. It catalyses the reaction 3-oxohexanoyl-[ACP] + NADPH + H(+) = (3R)-hydroxyhexanoyl-[ACP] + NADP(+). The catalysed reaction is (3R)-hydroxyhexanoyl-[ACP] = (2E)-hexenoyl-[ACP] + H2O. It carries out the reaction (2E)-hexenoyl-[ACP] + NADPH + H(+) = hexanoyl-[ACP] + NADP(+). The enzyme catalyses hexanoyl-[ACP] + malonyl-[ACP] + H(+) = 3-oxooctanoyl-[ACP] + holo-[ACP] + CO2. It catalyses the reaction 3-oxooctanoyl-[ACP] + NADPH + H(+) = (3R)-hydroxyoctanoyl-[ACP] + NADP(+). The catalysed reaction is (3R)-hydroxyoctanoyl-[ACP] = (2E)-octenoyl-[ACP] + H2O. It carries out the reaction (2E)-octenoyl-[ACP] + NADPH + H(+) = octanoyl-[ACP] + NADP(+). The enzyme catalyses octanoyl-[ACP] + malonyl-[ACP] + H(+) = 3-oxodecanoyl-[ACP] + holo-[ACP] + CO2. It catalyses the reaction 3-oxodecanoyl-[ACP] + NADPH + H(+) = (3R)-hydroxydecanoyl-[ACP] + NADP(+). The catalysed reaction is (3R)-hydroxydecanoyl-[ACP] = (2E)-decenoyl-[ACP] + H2O. It carries out the reaction (2E)-decenoyl-[ACP] + NADPH + H(+) = decanoyl-[ACP] + NADP(+). The enzyme catalyses decanoyl-[ACP] + malonyl-[ACP] + H(+) = 3-oxododecanoyl-[ACP] + holo-[ACP] + CO2. It catalyses the reaction 3-oxododecanoyl-[ACP] + NADPH + H(+) = (3R)-hydroxydodecanoyl-[ACP] + NADP(+). The catalysed reaction is (3R)-hydroxydodecanoyl-[ACP] = (2E)-dodecenoyl-[ACP] + H2O. It carries out the reaction (2E)-dodecenoyl-[ACP] + NADPH + H(+) = dodecanoyl-[ACP] + NADP(+). The enzyme catalyses dodecanoyl-[ACP] + malonyl-[ACP] + H(+) = 3-oxotetradecanoyl-[ACP] + holo-[ACP] + CO2. It catalyses the reaction 3-oxotetradecanoyl-[ACP] + NADPH + H(+) = (3R)-hydroxytetradecanoyl-[ACP] + NADP(+). The catalysed reaction is (3R)-hydroxytetradecanoyl-[ACP] = (2E)-tetradecenoyl-[ACP] + H2O. It carries out the reaction (2E)-tetradecenoyl-[ACP] + NADPH + H(+) = tetradecanoyl-[ACP] + NADP(+). The enzyme catalyses tetradecanoyl-[ACP] + malonyl-[ACP] + H(+) = 3-oxohexadecanoyl-[ACP] + holo-[ACP] + CO2. It catalyses the reaction 3-oxohexadecanoyl-[ACP] + NADPH + H(+) = (3R)-hydroxyhexadecanoyl-[ACP] + NADP(+). The catalysed reaction is (3R)-hydroxyhexadecanoyl-[ACP] = (2E)-hexadecenoyl-[ACP] + H2O. It carries out the reaction (2E)-hexadecenoyl-[ACP] + NADPH + H(+) = hexadecanoyl-[ACP] + NADP(+). The enzyme catalyses hexadecanoyl-[ACP] + malonyl-[ACP] + H(+) = 3-oxooctadecanoyl-[ACP] + holo-[ACP] + CO2. It catalyses the reaction 3-oxooctadecanoyl-[ACP] + NADPH + H(+) = (3R)-hydroxyoctadecanoyl-[ACP] + NADP(+). The catalysed reaction is (3R)-hydroxyoctadecanoyl-[ACP] = (2E)-octadecenoyl-[ACP] + H2O. It carries out the reaction (2E)-octadecenoyl-[ACP] + NADPH + H(+) = octadecanoyl-[ACP] + NADP(+). The enzyme catalyses tetradecanoyl-[ACP] + H2O = tetradecanoate + holo-[ACP] + H(+). It catalyses the reaction octadecanoyl-[ACP] + H2O = octadecanoate + holo-[ACP] + H(+). It functions in the pathway lipid metabolism; fatty acid biosynthesis. With respect to regulation, cerulenin, a potent non-competitive pharmacological inhibitor of FAS, binds covalently to the active site of the condensing enzyme region, inactivating a key enzyme step in fatty acid synthesis. In terms of biological role, fatty acid synthetase is a multifunctional enzyme that catalyzes the de novo biosynthesis of long-chain saturated fatty acids starting from acetyl-CoA and malonyl-CoA in the presence of NADPH. This multifunctional protein contains 7 catalytic activities and a site for the binding of the prosthetic group 4'-phosphopantetheine of the acyl carrier protein ([ACP]) domain. This chain is Fatty acid synthase (FASN), found in Gallus gallus (Chicken).